The sequence spans 391 residues: PPE family protein PPE18 (391 aa).

The protein belongs to the mycobacterial PPE family. In terms of assembly, interacts with human TLR2.

The protein localises to the secreted. It localises to the cell wall. The protein resides in the cell surface. Functionally, could be a crucial virulence factor for intracellular survival of M.tuberculosis. Favors development of Th2-type response, and down-regulates the pro-inflammatory and Th1-type response. Specifically interacts with the human Toll-like receptor 2 (TLR2), leading to an early and sustained activation of p38 MAPK, which induces IL-10 production and activates Th2-type immune response. Also inhibits pro-inflammatory cytokines IL-12p40 and TNF-alpha production. Acts by up-regulating the expression as well as tyrosine phosphorylation of suppressor of cytokine signaling 3 (SOCS-3), leading to the inhibition of phosphorylation of I-kappa-B-alpha, thereby preventing nuclear translocation of the NF-kappa-B/REL subunits and expression of NF-kappa-B regulated genes like IL-12 and TNF-alpha. Induction of SOCS-3 probably depends on the activation of p38 MAPK. The sequence is that of PPE family protein PPE18 from Mycobacterium tuberculosis (strain ATCC 25618 / H37Rv).